Reading from the N-terminus, the 305-residue chain is Acetylglutamate kinase (305 aa).

Substrate-binding positions include 67–68, R89, and N190; that span reads GG.

This sequence belongs to the acetylglutamate kinase family. ArgB subfamily.

It localises to the cytoplasm. It carries out the reaction N-acetyl-L-glutamate + ATP = N-acetyl-L-glutamyl 5-phosphate + ADP. Its pathway is amino-acid biosynthesis; L-arginine biosynthesis; N(2)-acetyl-L-ornithine from L-glutamate: step 2/4. Functionally, catalyzes the ATP-dependent phosphorylation of N-acetyl-L-glutamate. The chain is Acetylglutamate kinase from Bifidobacterium animalis subsp. lactis (strain AD011).